The primary structure comprises 504 residues: Glycerol kinase (504 aa).

ADP is bound at residue Thr-16. Positions 16 and 17 each coordinate ATP. Thr-16 contributes to the sn-glycerol 3-phosphate binding site. An ADP-binding site is contributed by Arg-20. Sn-glycerol 3-phosphate contacts are provided by Arg-86, Glu-87, Tyr-138, and Asp-247. Glycerol is bound by residues Arg-86, Glu-87, Tyr-138, Asp-247, and Gln-248. ADP contacts are provided by Thr-269 and Gly-316. 4 residues coordinate ATP: Thr-269, Gly-316, Gln-320, and Gly-417. ADP is bound by residues Gly-417 and Asn-421.

It belongs to the FGGY kinase family.

The catalysed reaction is glycerol + ATP = sn-glycerol 3-phosphate + ADP + H(+). Its pathway is polyol metabolism; glycerol degradation via glycerol kinase pathway; sn-glycerol 3-phosphate from glycerol: step 1/1. Inhibited by fructose 1,6-bisphosphate (FBP). In terms of biological role, key enzyme in the regulation of glycerol uptake and metabolism. Catalyzes the phosphorylation of glycerol to yield sn-glycerol 3-phosphate. This Trichodesmium erythraeum (strain IMS101) protein is Glycerol kinase.